A 541-amino-acid polypeptide reads, in one-letter code: Man(5)GlcNAc(2)-PP-dolichol translocation protein RFT1 (541 aa).

11 helical membrane passes run 16–36 (SGLL…AFIL), 45–62 (GIVN…TFLA), 85–105 (LLWL…WVWL), 123–143 (VLFF…WVLA), 154–176 (LAES…WLPH), 187–207 (LLYT…LLRS), 335–355 (LALL…QLAL), 376–396 (CLYV…FAAM), 414–434 (SFLV…FIMA), 470–490 (VLLG…AFLC), and 499–519 (LAHI…AFLT).

It belongs to the RFT1 family.

The protein localises to the endoplasmic reticulum membrane. The protein operates within protein modification; protein glycosylation. In terms of biological role, intramembrane glycolipid transporter that operates in the biosynthetic pathway of dolichol-linked oligosaccharides, the glycan precursors employed in protein asparagine (N)-glycosylation. The sequential addition of sugars to dolichol pyrophosphate produces dolichol-linked oligosaccharides containing fourteen sugars, including two GlcNAcs, nine mannoses and three glucoses. Once assembled, the oligosaccharide is transferred from the lipid to nascent proteins by oligosaccharyltransferases. The assembly of dolichol-linked oligosaccharides begins on the cytosolic side of the endoplasmic reticulum membrane and finishes in its lumen. RFT1 could mediate the translocation of the cytosolically oriented intermediate DolPP-GlcNAc2Man5, produced by ALG11, into the ER lumen where dolichol-linked oligosaccharides assembly continues. However, the intramembrane lipid transporter activity could not be confirmed in vitro. The polypeptide is Man(5)GlcNAc(2)-PP-dolichol translocation protein RFT1 (Mus musculus (Mouse)).